Here is a 364-residue protein sequence, read N- to C-terminus: Alanine racemase (364 aa).

K34 acts as the Proton acceptor; specific for D-alanine in catalysis. An N6-(pyridoxal phosphate)lysine modification is found at K34. R129 serves as a coordination point for substrate. Y259 (proton acceptor; specific for L-alanine) is an active-site residue. A substrate-binding site is contributed by M307.

Belongs to the alanine racemase family. Requires pyridoxal 5'-phosphate as cofactor.

It carries out the reaction L-alanine = D-alanine. It functions in the pathway amino-acid biosynthesis; D-alanine biosynthesis; D-alanine from L-alanine: step 1/1. Functionally, catalyzes the interconversion of L-alanine and D-alanine. May also act on other amino acids. This is Alanine racemase (alr) from Coxiella burnetii (strain RSA 331 / Henzerling II).